A 357-amino-acid chain; its full sequence is 3-isopropylmalate dehydrogenase (357 aa).

The substrate site is built by arginine 99, arginine 109, arginine 133, and aspartate 223. Mg(2+)-binding residues include aspartate 223, aspartate 247, and aspartate 251. 283–295 (GSAPDIAGEQRAD) is a binding site for NAD(+).

The protein belongs to the isocitrate and isopropylmalate dehydrogenases family. LeuB type 2 subfamily. Homodimer. It depends on Mg(2+) as a cofactor. Mn(2+) serves as cofactor.

Its subcellular location is the cytoplasm. The catalysed reaction is (2R,3S)-3-isopropylmalate + NAD(+) = 4-methyl-2-oxopentanoate + CO2 + NADH. It functions in the pathway amino-acid biosynthesis; L-leucine biosynthesis; L-leucine from 3-methyl-2-oxobutanoate: step 3/4. In terms of biological role, catalyzes the oxidation of 3-carboxy-2-hydroxy-4-methylpentanoate (3-isopropylmalate) to 3-carboxy-4-methyl-2-oxopentanoate. The product decarboxylates to 4-methyl-2 oxopentanoate. This Leifsonia xyli subsp. xyli (strain CTCB07) protein is 3-isopropylmalate dehydrogenase.